A 439-amino-acid chain; its full sequence is MSETHLTQQKFADLPLCDEVKQALNENGFEHCTPIQALSLPVLLEKKDIAGQAQTGTGKTLAFLVATFNHLLTTPVPEHRQLNQPRAIVMAPTRELAIQIAKDATLLSKHSGLKVGIVYGGEGYEAQRKVLDKGVDVLIGTTGRIIDYVRQGVINLGAIQAVVLDEADRMFDLGFIKDIRFLFNRMPGAKERLNMLFSATLSMKVQELAYDHMNDPVKVEIAPEEKTSRNIKEEIFYPSMEDKLKLLHSLIEEDWPEKAIVFANTKYQCENLWASLEADGHRVGLLTGDVPQKKRLKILEQFTQSELDILVATDVAARGLHISDVSHVYNYDLPDDCEDYVHRIGRTGRAGQKGVSVSFACEEYALNLPAIEDYIKHSIPVTSYDRDALIDIPPPVKIHRKPHAGGRNLRDRNGSPRPSGSHRSGSGRPPRHDRTRRHS.

Positions 9–37 (QKFADLPLCDEVKQALNENGFEHCTPIQA) match the Q motif motif. The Helicase ATP-binding domain maps to 40–219 (LPVLLEKKDI…YDHMNDPVKV (180 aa)). 53-60 (AQTGTGKT) contributes to the ATP binding site. A DEAD box motif is present at residues 165-168 (DEAD). The Helicase C-terminal domain occupies 243–390 (KLKLLHSLIE…VTSYDRDALI (148 aa)). A disordered region spans residues 394–439 (PPVKIHRKPHAGGRNLRDRNGSPRPSGSHRSGSGRPPRHDRTRRHS). Low complexity predominate over residues 415–428 (SPRPSGSHRSGSGR). A compositionally biased stretch (basic residues) spans 429–439 (PPRHDRTRRHS).

It belongs to the DEAD box helicase family. RhlB subfamily. As to quaternary structure, component of the RNA degradosome, which is a multiprotein complex involved in RNA processing and mRNA degradation.

Its subcellular location is the cytoplasm. It catalyses the reaction ATP + H2O = ADP + phosphate + H(+). Its function is as follows. DEAD-box RNA helicase involved in RNA degradation. Has RNA-dependent ATPase activity and unwinds double-stranded RNA. This Shewanella amazonensis (strain ATCC BAA-1098 / SB2B) protein is ATP-dependent RNA helicase RhlB.